We begin with the raw amino-acid sequence, 257 residues long: Receptor expression-enhancing protein 4 (257 aa).

2 helical membrane passes run 1-21 (MVSW…YPAY) and 42-62 (WIVF…ISWF). Phosphoserine occurs at positions 152 and 194. Residues 159-257 (IPDTSAPTYQ…KKTIPSDLDS (99 aa)) form a disordered region. Thr-196 is modified (phosphothreonine). At Ser-202 the chain carries Phosphoserine. Phosphothreonine is present on Thr-250. Residue Ser-253 is modified to Phosphoserine.

The protein belongs to the DP1 family.

It localises to the endoplasmic reticulum membrane. Microtubule-binding protein required to ensure proper cell division and nuclear envelope reassembly by sequestering the endoplasmic reticulum away from chromosomes during mitosis. Probably acts by clearing the endoplasmic reticulum membrane from metaphase chromosomes. This is Receptor expression-enhancing protein 4 (Reep4) from Rattus norvegicus (Rat).